The sequence spans 407 residues: Imidazolonepropionase (407 aa).

Positions 74 and 76 each coordinate Fe(3+). Residues H74 and H76 each contribute to the Zn(2+) site. 3 residues coordinate 4-imidazolone-5-propanoate: R83, Y146, and H179. Y146 serves as a coordination point for N-formimidoyl-L-glutamate. Fe(3+) is bound at residue H244. Zn(2+) is bound at residue H244. Q247 contacts 4-imidazolone-5-propanoate. D319 provides a ligand contact to Fe(3+). D319 contributes to the Zn(2+) binding site. N-formimidoyl-L-glutamate-binding residues include N321 and G323. T324 is a binding site for 4-imidazolone-5-propanoate.

Belongs to the metallo-dependent hydrolases superfamily. HutI family. Requires Zn(2+) as cofactor. Fe(3+) serves as cofactor.

Its subcellular location is the cytoplasm. The enzyme catalyses 4-imidazolone-5-propanoate + H2O = N-formimidoyl-L-glutamate. The protein operates within amino-acid degradation; L-histidine degradation into L-glutamate; N-formimidoyl-L-glutamate from L-histidine: step 3/3. Its function is as follows. Catalyzes the hydrolytic cleavage of the carbon-nitrogen bond in imidazolone-5-propanoate to yield N-formimidoyl-L-glutamate. It is the third step in the universal histidine degradation pathway. This chain is Imidazolonepropionase, found in Salmonella schwarzengrund (strain CVM19633).